We begin with the raw amino-acid sequence, 113 residues long: Large ribosomal subunit protein uL24 (113 aa).

Belongs to the universal ribosomal protein uL24 family. Part of the 50S ribosomal subunit.

In terms of biological role, one of two assembly initiator proteins, it binds directly to the 5'-end of the 23S rRNA, where it nucleates assembly of the 50S subunit. One of the proteins that surrounds the polypeptide exit tunnel on the outside of the subunit. The sequence is that of Large ribosomal subunit protein uL24 (rplX) from Fusobacterium nucleatum subsp. nucleatum (strain ATCC 25586 / DSM 15643 / BCRC 10681 / CIP 101130 / JCM 8532 / KCTC 2640 / LMG 13131 / VPI 4355).